The chain runs to 165 residues: Basic leucine zipper 43 (165 aa).

The region spanning 70–133 (NERKQKRKIS…EKVIEENVQL (64 aa)) is the bZIP domain. Residues 72–93 (RKQKRKISNRESARRSRMRKQR) are basic motif. Residues 98–112 (LWSQVMWLRDENHQL) form a leucine-zipper region.

Forms heterodimers with BZIP34 and BZIP61.

It localises to the nucleus. Its function is as follows. Probable transcription factor involved in somatic embryogenesis. Acts as a positive regulator of BHLH109. The polypeptide is Basic leucine zipper 43 (Arabidopsis thaliana (Mouse-ear cress)).